We begin with the raw amino-acid sequence, 765 residues long: 1,4-alpha-glucan branching enzyme GlgB (765 aa).

The active-site Nucleophile is the aspartate 431. Glutamate 484 functions as the Proton donor in the catalytic mechanism.

Belongs to the glycosyl hydrolase 13 family. GlgB subfamily. Monomer.

The catalysed reaction is Transfers a segment of a (1-&gt;4)-alpha-D-glucan chain to a primary hydroxy group in a similar glucan chain.. It participates in glycan biosynthesis; glycogen biosynthesis. Functionally, catalyzes the formation of the alpha-1,6-glucosidic linkages in glycogen by scission of a 1,4-alpha-linked oligosaccharide from growing alpha-1,4-glucan chains and the subsequent attachment of the oligosaccharide to the alpha-1,6 position. The protein is 1,4-alpha-glucan branching enzyme GlgB of Synechococcus sp. (strain CC9311).